A 321-amino-acid polypeptide reads, in one-letter code: MYSVNIEPDGSNHSPSRKRLKQILWGLMLVLSVTIYGSHAPLIYLCKVNGEIPFSSSAVVLLIELSKFVISLVFFLIQDWKSLKASVSWHLAAPYAVPAVLYGANNNLVVYIQHFMDPSSFQVLSNLKIVSTAVLYSLFLRQRLSVRRWLSVFLLLAAGVFYSYGGIQDLEKVSSDTNLYVTLPGLLLMLAYCLISGLSAVYTEMTLKTQKIPLNMQNLYLYSFGIIINLTAHLTSSKNSDFFDGFSVWVWVIILSQALNGLIMSLVMKLSNNITRLFIISFSMLANGFLSFILFQLQLTALFFLAVVLIGLAVYMYYGMK.

At 1-22 (MYSVNIEPDGSNHSPSRKRLKQ) the chain is on the cytoplasmic side. A helical transmembrane segment spans residues 23–43 (ILWGLMLVLSVTIYGSHAPLI). The Lumenal portion of the chain corresponds to 44 to 56 (YLCKVNGEIPFSS). The helical transmembrane segment at 57–77 (SAVVLLIELSKFVISLVFFLI) threads the bilayer. Over 78–91 (QDWKSLKASVSWHL) the chain is Cytoplasmic. Residues 92–112 (AAPYAVPAVLYGANNNLVVYI) form a helical membrane-spanning segment. Residues 113 to 119 (QHFMDPS) lie on the Lumenal side of the membrane. Residues 120–140 (SFQVLSNLKIVSTAVLYSLFL) traverse the membrane as a helical segment. Over 141-149 (RQRLSVRRW) the chain is Cytoplasmic. A helical membrane pass occupies residues 150 to 170 (LSVFLLLAAGVFYSYGGIQDL). Topologically, residues 171-180 (EKVSSDTNLY) are lumenal. Residues 181 to 201 (VTLPGLLLMLAYCLISGLSAV) traverse the membrane as a helical segment. Topologically, residues 202 to 211 (YTEMTLKTQK) are cytoplasmic. Residues 212 to 232 (IPLNMQNLYLYSFGIIINLTA) form a helical membrane-spanning segment. Residues 233–247 (HLTSSKNSDFFDGFS) lie on the Lumenal side of the membrane. The chain crosses the membrane as a helical span at residues 248-268 (VWVWVIILSQALNGLIMSLVM). At 269–321 (KLSNNITRLFIISFSMLANGFLSFILFQLQLTALFFLAVVLIGLAVYMYYGMK) the chain is on the cytoplasmic side.

This sequence belongs to the nucleotide-sugar transporter family. SLC35A subfamily.

It localises to the golgi apparatus membrane. The enzyme catalyses CDP-L-ribitol(in) + CDP(out) = CDP-L-ribitol(out) + CDP(in). Its function is as follows. Mediates the transport of CDP-ribitol. Does not exhibit CMP-sialic acid, UDP-galactose and UDP-N-acetylglucosamine transport activity. The sequence is that of Probable UDP-sugar transporter protein SLC35A4 from Xenopus tropicalis (Western clawed frog).